The following is a 565-amino-acid chain: Phospholipase B-like protein C (565 aa).

Residues 1 to 21 (MNKIIILISLFLNFLFGYVVC) form the signal peptide. N53, N84, N118, N200, N201, N211, N266, N302, N406, and N485 each carry an N-linked (GlcNAc...) asparagine glycan.

It belongs to the phospholipase B-like family.

Its subcellular location is the secreted. Its function is as follows. Probable phospholipase. The chain is Phospholipase B-like protein C (plbC) from Dictyostelium discoideum (Social amoeba).